We begin with the raw amino-acid sequence, 778 residues long: Probable protein kinase DDB_G0291133 (778 aa).

The disordered stretch occupies residues L129 to N162. One can recognise a Protein kinase domain in the interval F177–I462. ATP-binding positions include L183–V191 and K206. Residue D303 is the Proton acceptor of the active site. Mg(2+) is bound by residues N308 and D321. Disordered stretches follow at residues N478–N509, H562–G697, and S757–N778. The segment covering S578–S590 has biased composition (acidic residues). Over residues S599–L651 the composition is skewed to low complexity. Residues V652–S670 are compositionally biased toward polar residues. A compositionally biased stretch (low complexity) spans N671–N693. Residues S757–S766 are compositionally biased toward basic and acidic residues.

It belongs to the protein kinase superfamily. Ser/Thr protein kinase family. WEE1 subfamily.

The catalysed reaction is L-seryl-[protein] + ATP = O-phospho-L-seryl-[protein] + ADP + H(+). It carries out the reaction L-threonyl-[protein] + ATP = O-phospho-L-threonyl-[protein] + ADP + H(+). This chain is Probable protein kinase DDB_G0291133, found in Dictyostelium discoideum (Social amoeba).